The chain runs to 180 residues: GTP cyclohydrolase 1 (180 aa).

Zn(2+)-binding residues include Cys-71, His-74, and Cys-142.

It belongs to the GTP cyclohydrolase I family. In terms of assembly, toroid-shaped homodecamer, composed of two pentamers of five dimers.

It carries out the reaction GTP + H2O = 7,8-dihydroneopterin 3'-triphosphate + formate + H(+). The protein operates within cofactor biosynthesis; 7,8-dihydroneopterin triphosphate biosynthesis; 7,8-dihydroneopterin triphosphate from GTP: step 1/1. The protein is GTP cyclohydrolase 1 (folE) of Helicobacter pylori (strain J99 / ATCC 700824) (Campylobacter pylori J99).